A 176-amino-acid polypeptide reads, in one-letter code: WASH complex subunit 3 (176 aa).

A coiled-coil region spans residues 47 to 74 (ETKFVEMERQLQKTEAALIILEAKLASI). Disordered regions lie at residues 84-123 (ATEA…PESV) and 152-176 (KMQS…GQRE). Residues 104 to 115 (TTEPPTTENPTE) show a composition bias toward low complexity.

It belongs to the CCDC53 family. As to quaternary structure, component of the WASH complex.

It localises to the early endosome. Acts at least in part as component of the WASH complex which may regulate wash nucleation-promoting factor (NPF) activity and is required for its membrane targeting during endosomal sorting. During embryogenesis, not involved in the wash-dependent developmental migration of hemocytes anteriorly from the tail. The chain is WASH complex subunit 3 from Drosophila melanogaster (Fruit fly).